The chain runs to 281 residues: 2-dehydro-3-deoxyphosphooctonate aldolase (281 aa).

Belongs to the KdsA family.

The protein resides in the cytoplasm. The catalysed reaction is D-arabinose 5-phosphate + phosphoenolpyruvate + H2O = 3-deoxy-alpha-D-manno-2-octulosonate-8-phosphate + phosphate. It functions in the pathway carbohydrate biosynthesis; 3-deoxy-D-manno-octulosonate biosynthesis; 3-deoxy-D-manno-octulosonate from D-ribulose 5-phosphate: step 2/3. The protein operates within bacterial outer membrane biogenesis; lipopolysaccharide biosynthesis. This Pseudomonas syringae pv. tomato (strain ATCC BAA-871 / DC3000) protein is 2-dehydro-3-deoxyphosphooctonate aldolase.